A 311-amino-acid polypeptide reads, in one-letter code: Thioredoxin reductase (311 aa).

35–42 (ERGIPGGQ) serves as a coordination point for FAD. Cysteine 134 and cysteine 137 are disulfide-bonded. 277–286 (DVRDKGLRQI) serves as a coordination point for FAD.

This sequence belongs to the class-II pyridine nucleotide-disulfide oxidoreductase family. In terms of assembly, homodimer. The cofactor is FAD.

Its subcellular location is the cytoplasm. The catalysed reaction is [thioredoxin]-dithiol + NADP(+) = [thioredoxin]-disulfide + NADPH + H(+). This is Thioredoxin reductase (trxB) from Staphylococcus aureus (strain MRSA252).